Here is a 499-residue protein sequence, read N- to C-terminus: Protein flp (499 aa).

4 helical membrane passes run 6–26, 389–409, 433–453, and 471–491; these read LYFL…IYIT, FNIV…FSAY, LTLC…YLIL, and LTLT…LLIL.

The protein localises to the cell membrane. In terms of biological role, its precise function is unknown. Has no penicillin-binding activity and is not involved in methicillin resistance. This Staphylococcus aureus (strain MRSA252) protein is Protein flp (flp).